Here is a 397-residue protein sequence, read N- to C-terminus: Troponin T, skeletal muscle (397 aa).

The span at 1-16 (MSDDEEYTSSEEEEVV) shows a compositional bias: acidic residues. 3 disordered regions span residues 1 to 148 (MSDD…NFTI), 234 to 261 (ERQKQQLRHKALKKGLDPEALTGKYPPK), and 294 to 397 (DSNE…EEEE). 3 stretches are compositionally biased toward basic and acidic residues: residues 37–77 (EFIK…LKEK), 84–129 (TRAE…EKKR), and 136–148 (MKDKDKKGPNFTI). Composition is skewed to basic and acidic residues over residues 294 to 307 (DSNEKIWNEKKEQY) and 319 to 329 (FGERPGKKAGE). The span at 331–397 (ETPEGEEDAK…EEEEEEEEEE (67 aa)) shows a compositional bias: acidic residues.

This sequence belongs to the troponin T family. Some glutamate residues are polyglycylated by TTLL3B. This modification occurs exclusively on glutamate residues and results in polyglycine chains on the gamma-carboxyl group. In terms of tissue distribution, isoform 3 is expressed in the hypoderm. Isoform 8 is expressed in the dorsal vessel. Isoform 6 is expressed in adult TDT muscle and isoform 9 in adult IFM, flight and jump muscles.

Functionally, troponin T is the tropomyosin-binding subunit of troponin, the thin filament regulatory complex which confers calcium-sensitivity to striated muscle actomyosin ATPase activity. In Drosophila melanogaster (Fruit fly), this protein is Troponin T, skeletal muscle (up).